The sequence spans 826 residues: Breast cancer anti-estrogen resistance protein 3 homolog (826 aa).

At alanine 2 the chain carries N-acetylalanine. Residues serine 32, serine 78, serine 83, and serine 182 each carry the phosphoserine modification. Residues 46-81 (SIHGTLPRKKKGPPPIRSCDNFSHVGTLPHSRSPRH) form a disordered region. One can recognise an SH2 domain in the interval 154 to 253 (WYHGRIPRQV…QSGAIIFQPV (100 aa)). The interval 268-287 (ASSPDRAHEGSLTEGRPDAA) is disordered. At serine 291 the chain carries Phosphoserine. The disordered stretch occupies residues 294-321 (VGGTQAREQGLPRGNLLRNKEKSGSQPA). Lysine 335 is subject to N6-methyllysine. Residues 348-406 (KLTPQSPSVGTSPCPNSPVFRTGSEPTLSPAVVRRVSSDARPGEALRGSDSQLCPKPPP) are disordered. The span at 350-361 (TPQSPSVGTSPC) shows a compositional bias: polar residues. A phosphoserine mark is found at serine 359, serine 364, serine 376, and serine 472. Positions 480-501 (DDDDRTRPWKPPPAPGDTVGED) are disordered. The region spanning 549–819 (DPKVIAQHLL…TALSRKLEPP (271 aa)) is the Ras-GEF domain. A mediates the interaction with BCAR1/p130CAS region spans residues 745–749 (LATAR).

Part of a complex comprised of PTPRA, BCAR1, BCAR3 (via SH2 domain) and SRC; the formation of the complex is dependent on integrin mediated-tyrosine phosphorylation of PTPRA. Within the complex, interacts (via SH2 domain) with PTPRA (when phosphorylated on 'Tyr-797'). Interacts (via Ras-GEF domain) with BCAR1. Interacts (via Ras-GEF domain) with NEDD9. Interacts with PTK2/FAK1. Interacts with PTPN1. Interacts (via SH2 domain) with EGFR (when tyrosine-phosphorylated). In terms of processing, phosphorylated on tyrosine residues.

The protein localises to the cytoplasm. It is found in the cell junction. Its subcellular location is the focal adhesion. In terms of biological role, acts as an adapter protein downstream of several growth factor receptors to promote cell proliferation, migration, and redistribution of actin fibers. Specifically involved in INS/insulin signaling pathway by mediating MAPK1/ERK2-MAPK3/ERK1 activation and DNA synthesis. Promotes insulin-mediated membrane ruffling. In response to vasoconstrictor peptide EDN1, involved in the activation of RAP1 downstream of PTK2B via interaction with phosphorylated BCAR1. Inhibits cell migration and invasion via regulation of TGFB-mediated matrix digestion, actin filament rearrangement, and inhibition of invadopodia activity. May inhibit TGFB-SMAD signaling, via facilitating BCAR1 and SMAD2 and/or SMAD3 interaction. Regulates EGF-induced DNA synthesis. Required for the maintenance of ocular lens morphology and structural integrity, potentially via regulation of focal adhesion complex signaling. Acts upstream of PTPRA to regulate the localization of BCAR1 and PTPRA to focal adhesions, via regulation of SRC-mediated phosphorylation of PTPRA. Positively regulates integrin-induced tyrosine phosphorylation of BCAR1. Acts as a guanine nucleotide exchange factor (GEF) for small GTPases RALA, RAP1A and RRAS. However, in a contrasting study, lacks GEF activity towards RAP1. This Bos taurus (Bovine) protein is Breast cancer anti-estrogen resistance protein 3 homolog (BCAR3).